Consider the following 413-residue polypeptide: High zinc activated nuclear receptor protein (413 aa).

A DNA-binding region (nuclear receptor) is located at residues 11–86 (LGNCKICLQR…EGMKIELVQL (76 aa)). 2 consecutive NR C4-type zinc fingers follow at residues 14–34 (CKIC…CRAC) and 50–69 (CKEK…CRSC). Residues 101–412 (SIDPLFTPNV…TSQCIVHTKN (312 aa)) are required for zinc-binding. One can recognise an NR LBD domain in the interval 135 to 396 (QMTSGYAMFL…VCCKNFKEDA (262 aa)).

It belongs to the nuclear hormone receptor family. In terms of tissue distribution, weakly expressed in intestinal cells in the absence of zinc supplementation. Upon zinc supplementation, accumulates in alimentary tract cells, and it is mainly expressed in the intestine.

The protein localises to the nucleus. The protein resides in the cytoplasm. Functionally, nuclear receptor transcription factor that binds to DNA enhancer elements to promote the transcription of genes required to maintain micronutrient homeostasis. Direct binding to its ligand zinc allows for nuclear accumulation and activation, which thereby induces the transcription of genes required to promote the storage and detoxification of excess dietary zinc. This in turn, allows for internal zinc levels to be detected and regulated. The protein is High zinc activated nuclear receptor protein of Caenorhabditis elegans.